Reading from the N-terminus, the 561-residue chain is Bifunctional NAD(P)H-hydrate repair enzyme (561 aa).

The segment at 1-241 (MLSRISERCT…WMIAAERMDA (241 aa)) is NAD(P)H-hydrate epimerase. The 207-residue stretch at 29–235 (LRDAEPAAAA…SLGLEEWMIA (207 aa)) folds into the YjeF N-terminal domain. An NADPHX 1; for epimerase activity region spans residues 77-81 (NNGGD). K(+) contacts are provided by asparagine 78 and aspartate 145. The tract at residues 149 to 155 (GTGISGP) is NADPHX 1; for epimerase activity. The (6S)-NADPHX site is built by tyrosine 160 and aspartate 178. Serine 181 provides a ligand contact to K(+). Residues 249-548 (LGDVYGYFST…PRIPFIVNAS (300 aa)) form the YjeF C-terminal domain. Residues 249 to 561 (LGDVYGYFST…SATQQRPSGL (313 aa)) form an ADP-dependent (S)-NAD(P)H-hydrate dehydratase region. Residue glycine 351 coordinates (6S)-NADPHX. The interval 417-423 (HPGEAAR) is NADPHX 2; for dehydratase activity. Residues 454–458 (KGPGT) and 475–484 (NAGMASGGMG) each bind ADP. Residue aspartate 485 participates in (6S)-NADPHX binding.

The protein in the N-terminal section; belongs to the NnrE/AIBP family. This sequence in the C-terminal section; belongs to the NnrD/CARKD family. Requires K(+) as cofactor.

The catalysed reaction is (6S)-NADHX + ADP = AMP + phosphate + NADH + H(+). It catalyses the reaction (6S)-NADPHX + ADP = AMP + phosphate + NADPH + H(+). It carries out the reaction (6R)-NADHX = (6S)-NADHX. The enzyme catalyses (6R)-NADPHX = (6S)-NADPHX. Functionally, bifunctional enzyme that catalyzes the epimerization of the S- and R-forms of NAD(P)HX and the dehydration of the S-form of NAD(P)HX at the expense of ADP, which is converted to AMP. This allows the repair of both epimers of NAD(P)HX, a damaged form of NAD(P)H that is a result of enzymatic or heat-dependent hydration. This is Bifunctional NAD(P)H-hydrate repair enzyme from Leishmania braziliensis.